The sequence spans 202 residues: Small ribosomal subunit protein uS5 (202 aa).

The segment covering 1–13 has biased composition (gly residues); that stretch reads MPGQQRRGGGSGG. Residues 1–31 are disordered; it reads MPGQQRRGGGSGGSDRRERRDRSGGGPAQEK. Positions 14–23 are enriched in basic and acidic residues; it reads SDRRERRDRS. One can recognise an S5 DRBM domain in the interval 34-97; that stretch reads YVERVVAINR…EEAKKHFFKV (64 aa).

Belongs to the universal ribosomal protein uS5 family. In terms of assembly, part of the 30S ribosomal subunit. Contacts proteins S4 and S8.

In terms of biological role, with S4 and S12 plays an important role in translational accuracy. Its function is as follows. Located at the back of the 30S subunit body where it stabilizes the conformation of the head with respect to the body. The protein is Small ribosomal subunit protein uS5 of Parafrankia sp. (strain EAN1pec).